The sequence spans 365 residues: Succinyl-diaminopimelate desuccinylase (365 aa).

Zn(2+) is bound at residue H65. D67 is a catalytic residue. D96 contributes to the Zn(2+) binding site. E126 acts as the Proton acceptor in catalysis. Zn(2+) contacts are provided by E127, E155, and H340.

Belongs to the peptidase M20A family. DapE subfamily. In terms of assembly, homodimer. The cofactor is Zn(2+). It depends on Co(2+) as a cofactor.

The catalysed reaction is N-succinyl-(2S,6S)-2,6-diaminopimelate + H2O = (2S,6S)-2,6-diaminopimelate + succinate. It participates in amino-acid biosynthesis; L-lysine biosynthesis via DAP pathway; LL-2,6-diaminopimelate from (S)-tetrahydrodipicolinate (succinylase route): step 3/3. Functionally, catalyzes the hydrolysis of N-succinyl-L,L-diaminopimelic acid (SDAP), forming succinate and LL-2,6-diaminopimelate (DAP), an intermediate involved in the bacterial biosynthesis of lysine and meso-diaminopimelic acid, an essential component of bacterial cell walls. The sequence is that of Succinyl-diaminopimelate desuccinylase from Campylobacter jejuni subsp. jejuni serotype O:2 (strain ATCC 700819 / NCTC 11168).